An 843-amino-acid chain; its full sequence is Protein P (843 aa).

The tract at residues 1 to 177 is terminal protein domain (TP); it reads MPLSYQHFRK…FCGSPYSWEQ (177 aa). The spacer stretch occupies residues 178 to 346; that stretch reads ELQHGRLFFK…YCLSHIVNLL (169 aa). The disordered stretch occupies residues 248 to 272; that stretch reads HPTTRQSFGVEPSGSGHIDNSASNS. A polymerase/reverse transcriptase domain (RT) region spans residues 347–690; sequence EDWGPCTENG…YLNLYPVARQ (344 aa). The Reverse transcriptase domain occupies 357-600; it reads EHNIRIPRTP…YSLNFMGYVI (244 aa). Residues Asp429, Asp551, and Asp552 each contribute to the Mg(2+) site.

Belongs to the hepadnaviridae P protein family.

The catalysed reaction is DNA(n) + a 2'-deoxyribonucleoside 5'-triphosphate = DNA(n+1) + diphosphate. It carries out the reaction Endonucleolytic cleavage to 5'-phosphomonoester.. Activated by host HSP70 and HSP40 in vitro to be able to bind the epsilon loop of the pgRNA. Because deletion of the RNase H region renders the protein partly chaperone-independent, the chaperones may be needed indirectly to relieve occlusion of the RNA-binding site by this domain. Inhibited by several reverse-transcriptase inhibitors: Lamivudine, Adefovir and Entecavir. Multifunctional enzyme that converts the viral RNA genome into dsDNA in viral cytoplasmic capsids. This enzyme displays a DNA polymerase activity that can copy either DNA or RNA templates, and a ribonuclease H (RNase H) activity that cleaves the RNA strand of RNA-DNA heteroduplexes in a partially processive 3'- to 5'-endonucleasic mode. Neo-synthesized pregenomic RNA (pgRNA) are encapsidated together with the P protein, and reverse-transcribed inside the nucleocapsid. Initiation of reverse-transcription occurs first by binding the epsilon loop on the pgRNA genome, and is initiated by protein priming, thereby the 5'-end of (-)DNA is covalently linked to P protein. Partial (+)DNA is synthesized from the (-)DNA template and generates the relaxed circular DNA (RC-DNA) genome. After budding and infection, the RC-DNA migrates in the nucleus, and is converted into a plasmid-like covalently closed circular DNA (cccDNA). The activity of P protein does not seem to be necessary for cccDNA generation, and is presumably released from (+)DNA by host nuclear DNA repair machinery. This Homo sapiens (Human) protein is Protein P.